We begin with the raw amino-acid sequence, 54 residues long: Sec-independent protein translocase protein TatA (54 aa).

The helical transmembrane segment at 1–21 (MGMSFSHLLIVLLIIFVLFGA) threads the bilayer.

This sequence belongs to the TatA/E family. The Tat system comprises two distinct complexes: a TatABC complex, containing multiple copies of TatA, TatB and TatC subunits, and a separate TatA complex, containing only TatA subunits. Substrates initially bind to the TatABC complex, which probably triggers association of the separate TatA complex to form the active translocon.

It is found in the cell inner membrane. Functionally, part of the twin-arginine translocation (Tat) system that transports large folded proteins containing a characteristic twin-arginine motif in their signal peptide across membranes. TatA could form the protein-conducting channel of the Tat system. The protein is Sec-independent protein translocase protein TatA of Rickettsia prowazekii (strain Madrid E).